A 372-amino-acid polypeptide reads, in one-letter code: Ligninase A (372 aa).

An N-terminal signal peptide occupies residues 1 to 21 (MAFKQLVAAISLALSLTTANA). Residues 22-28 (AVVKEKR) constitute a propeptide that is removed on maturation. Intrachain disulfides connect C31/C43, C42/C313, C62/C148, and C277/C345. H75 serves as the catalytic Proton acceptor. The Ca(2+) site is built by D76, G94, D96, and S98. Residue H204 participates in heme b binding. S205, D222, T224, I227, and D229 together coordinate Ca(2+). The N-linked (GlcNAc...) asparagine glycan is linked to N285.

It belongs to the peroxidase family. Ligninase subfamily. Requires heme b as cofactor. Ca(2+) is required as a cofactor.

It catalyses the reaction 1-(3,4-dimethoxyphenyl)-2-(2-methoxyphenoxy)propane-1,3-diol + H2O2 = 3,4-dimethoxybenzaldehyde + guaiacol + glycolaldehyde + H2O. The enzyme catalyses 2 (3,4-dimethoxyphenyl)methanol + H2O2 = 2 (3,4-dimethoxyphenyl)methanol radical + 2 H2O. It functions in the pathway secondary metabolite metabolism; lignin degradation. In terms of biological role, depolymerization of lignin. Catalyzes the C(alpha)-C(beta) cleavage of the propyl side chains of lignin. In Phanerodontia chrysosporium (White-rot fungus), this protein is Ligninase A (LIPA).